The chain runs to 125 residues: Large ribosomal subunit protein bL12 (125 aa).

In terms of assembly, homodimer. Part of the ribosomal stalk of the 50S ribosomal subunit. Forms a multimeric L10(L12)X complex, where L10 forms an elongated spine to which 2 to 4 L12 dimers bind in a sequential fashion. Binds GTP-bound translation factors. Post-translationally, two isoforms seem to exist. One is probably dimethylated on Lys-69 and monomethylated on Lys-86 while the other is probably acetylated or trimethylated on both Lys-86 and Lys-89.

Its function is as follows. Forms part of the ribosomal stalk which helps the ribosome interact with GTP-bound translation factors. Is thus essential for accurate translation. The sequence is that of Large ribosomal subunit protein bL12 from Rhodopseudomonas palustris (strain ATCC BAA-98 / CGA009).